We begin with the raw amino-acid sequence, 967 residues long: Putative helicase MOV-10 (967 aa).

Positions 85-117 (ADQYRRPRTDTEVSAPAPGQQPSSGPPAPQSRA) are disordered. Residues 98–107 (SAPAPGQQPS) show a composition bias toward low complexity. Residue 516 to 523 (GPPGTGKT) coordinates ATP. The DEAG box signature appears at 638–641 (DECG).

It belongs to the DNA2/NAM7 helicase family. SDE3 subfamily.

It localises to the cytoplasm. The protein localises to the P-body. It is found in the cytoplasmic ribonucleoprotein granule. The protein resides in the stress granule. Its subcellular location is the nucleus. It carries out the reaction ATP + H2O = ADP + phosphate + H(+). Functionally, 5' to 3' RNA helicase that is involved in a number of cellular roles ranging from mRNA metabolism and translation, modulation of viral infectivity, inhibition of retrotransposition, or regulation of synaptic transmission. Plays an important role in innate antiviral immunity by promoting type I interferon production. Required for microRNA (miRNA)-mediated gene silencing by the RNA-induced silencing complex (RISC). Required for both miRNA-mediated translational repression and miRNA-mediated cleavage of complementary mRNAs by RISC. In cooperation with FMR1, regulates miRNA-mediated translational repression by AGO2. Restricts retrotransposition of long interspersed element-1 (LINE-1). Required for embryonic viability and for normal central nervous system development and function. May function as a messenger ribonucleoprotein (mRNP) clearance factor. In Gallus gallus (Chicken), this protein is Putative helicase MOV-10 (MOV10).